The chain runs to 321 residues: MSKAAAPQIELASADPSIAQEMTRWLSHLGAERRLSPKTLEAYGRDLRQCLDFLCNHWGERVTLKRFAALEATDVRAFMAMRRADDIAGRSLMRALAGLRSFGRFLEREGKGKVGALSAIRAPKVAKSLPKPLPMASAKRLADADERAGEERETWILARDAAVMALLYGSGLRISEALGLKRREVPKPGEGDVLVVTGKGNKTRMVPVLQNVLALVQEYVSMCPYPLPAEGPIFVGARGGPLSPRIIQLAMERLRGALGLPDSATPHALRHSFATHLLSRGGDLRAIQELLGHSSLSTTQIYTGIDSERLLEVYASAHPRR.

The 92-residue stretch at P16 to E107 folds into the Core-binding (CB) domain. The Tyr recombinase domain occupies S128–A315. Residues R173, K199, H267, R270, and H293 contribute to the active site. The active-site O-(3'-phospho-DNA)-tyrosine intermediate is Y302.

The protein belongs to the 'phage' integrase family. XerC subfamily. Forms a cyclic heterotetrameric complex composed of two molecules of XerC and two molecules of XerD.

The protein localises to the cytoplasm. Functionally, site-specific tyrosine recombinase, which acts by catalyzing the cutting and rejoining of the recombining DNA molecules. The XerC-XerD complex is essential to convert dimers of the bacterial chromosome into monomers to permit their segregation at cell division. It also contributes to the segregational stability of plasmids. The polypeptide is Tyrosine recombinase XerC (Bradyrhizobium diazoefficiens (strain JCM 10833 / BCRC 13528 / IAM 13628 / NBRC 14792 / USDA 110)).